The sequence spans 299 residues: DNA-binding transcriptional activator HetR (299 aa).

The active site involves S152.

This sequence belongs to the peptidase S48 family. Homodimer; disulfide-linked.

Functionally, might be involved in temporal and/or spatial regulation of nitrogen fixation. Dimerization is required for DNA-binding. Has both a protease and a DNA-binding activity. The protein is DNA-binding transcriptional activator HetR of Leptolyngbya boryana (Plectonema boryanum).